The chain runs to 227 residues: Ribose-5-phosphate isomerase A (227 aa).

Substrate contacts are provided by residues 28–31, 84–87, and 97–100; these read TGST, DGAD, and KGGG. The Proton acceptor role is filled by glutamate 106. Lysine 124 lines the substrate pocket.

This sequence belongs to the ribose 5-phosphate isomerase family. As to quaternary structure, homodimer.

It carries out the reaction aldehydo-D-ribose 5-phosphate = D-ribulose 5-phosphate. Its pathway is carbohydrate degradation; pentose phosphate pathway; D-ribose 5-phosphate from D-ribulose 5-phosphate (non-oxidative stage): step 1/1. Its function is as follows. Catalyzes the reversible conversion of ribose-5-phosphate to ribulose 5-phosphate. The protein is Ribose-5-phosphate isomerase A of Lactiplantibacillus plantarum (strain ATCC BAA-793 / NCIMB 8826 / WCFS1) (Lactobacillus plantarum).